We begin with the raw amino-acid sequence, 392 residues long: Phosphoglycerate kinase (392 aa).

Substrate-binding positions include 21-23, R36, 59-62, R113, and R146; these read DLN and HLGR. ATP is bound by residues K197, E319, and 345–348; that span reads GGDT.

This sequence belongs to the phosphoglycerate kinase family. As to quaternary structure, monomer.

The protein localises to the cytoplasm. It carries out the reaction (2R)-3-phosphoglycerate + ATP = (2R)-3-phospho-glyceroyl phosphate + ADP. Its pathway is carbohydrate degradation; glycolysis; pyruvate from D-glyceraldehyde 3-phosphate: step 2/5. The sequence is that of Phosphoglycerate kinase from Alkalilimnicola ehrlichii (strain ATCC BAA-1101 / DSM 17681 / MLHE-1).